The chain runs to 906 residues: Protein translocase subunit SecA (906 aa).

ATP is bound by residues glutamine 89, 107 to 111, and aspartate 502; that span reads GEGKT. Residues cysteine 890, cysteine 892, cysteine 901, and histidine 902 each coordinate Zn(2+).

It belongs to the SecA family. As to quaternary structure, monomer and homodimer. Part of the essential Sec protein translocation apparatus which comprises SecA, SecYEG and auxiliary proteins SecDF-YajC and YidC. Zn(2+) serves as cofactor.

The protein resides in the cell inner membrane. The protein localises to the cytoplasm. It carries out the reaction ATP + H2O + cellular proteinSide 1 = ADP + phosphate + cellular proteinSide 2.. In terms of biological role, part of the Sec protein translocase complex. Interacts with the SecYEG preprotein conducting channel. Has a central role in coupling the hydrolysis of ATP to the transfer of proteins into and across the cell membrane, serving both as a receptor for the preprotein-SecB complex and as an ATP-driven molecular motor driving the stepwise translocation of polypeptide chains across the membrane. The polypeptide is Protein translocase subunit SecA (Bartonella quintana (strain Toulouse) (Rochalimaea quintana)).